Reading from the N-terminus, the 804-residue chain is Probable replication endonuclease from prophage-like region 2 (804 aa).

Active-site O-(5'-phospho-DNA)-tyrosine intermediate residues include Tyr503 and Tyr507.

This sequence belongs to the phage GPA family.

Its function is as follows. Possible endonuclease which induces a single-strand cut and initiates DNA replication. The sequence is that of Probable replication endonuclease from prophage-like region 2 from Salmonella typhi.